The sequence spans 360 residues: Cysteine proteinase 2 (360 aa).

A signal peptide spans 1–19 (MVPRRLFVLAVVVLADTAA). Positions 20 to 142 (VVNSGFADSN…NHRMRAAAVA (123 aa)) are cleaved as a propeptide — activation peptide. Asn-125 carries an N-linked (GlcNAc...) asparagine glycan. Cystine bridges form between Cys-164-Cys-207 and Cys-198-Cys-240. Cys-167 is an active-site residue. N-linked (GlcNAc...) asparagine glycosylation is present at Asn-256. The cysteines at positions 298 and 348 are disulfide-linked. Active-site residues include His-307 and Asn-327.

It belongs to the peptidase C1 family. Expressed at the onset of germination.

It localises to the vacuole. Functionally, involved in the degradation of the storage protein zein. May play a role in proteolysis during emergencies. The polypeptide is Cysteine proteinase 2 (CCP2) (Zea mays (Maize)).